Here is a 501-residue protein sequence, read N- to C-terminus: Aspartate--tRNA ligase, cytoplasmic (501 aa).

Thr-52 bears the Phosphothreonine mark. The residue at position 74 (Lys-74) is an N6-acetyllysine. Position 229 (Glu-229) interacts with L-aspartate. Ser-249 carries the post-translational modification Phosphoserine. Residues 251-254 (QLYK) are aspartate. Arg-273 contributes to the L-aspartate binding site. Residues 273-275 (RAE) and 281-283 (RHL) each bind ATP. At Lys-374 the chain carries N6-acetyllysine. Residues 411–415 (KQSNS) are binding site for the 3'-end of tRNA. ATP is bound at residue Glu-424. Positions 427 and 431 each coordinate L-aspartate. ATP is bound at residue 472–475 (GLER). A Phosphothreonine; by PKA modification is found at Thr-500.

Belongs to the class-II aminoacyl-tRNA synthetase family. Type 2 subfamily. As to quaternary structure, homodimer. Part of a multisubunit complex that groups tRNA ligases for Arg (RARS1), Asp (DARS1), Gln (QARS1), Ile (IARS1), Leu (LARS1), Lys (KARS1), Met (MARS1) the bifunctional ligase for Glu and Pro (EPRS1) and the auxiliary subunits AIMP1/p43, AIMP2/p38 and EEF1E1/p18.

Its subcellular location is the cytoplasm. The enzyme catalyses tRNA(Asp) + L-aspartate + ATP = L-aspartyl-tRNA(Asp) + AMP + diphosphate. In terms of biological role, catalyzes the specific attachment of an amino acid to its cognate tRNA in a 2 step reaction: the amino acid (AA) is first activated by ATP to form AA-AMP and then transferred to the acceptor end of the tRNA. In Pongo abelii (Sumatran orangutan), this protein is Aspartate--tRNA ligase, cytoplasmic (DARS1).